Reading from the N-terminus, the 536-residue chain is Phosphoenolpyruvate carboxykinase (ATP) (536 aa).

Arg-61, Tyr-195, and Lys-201 together coordinate substrate. Residues Lys-201, His-220, and 236–244 contribute to the ATP site; that span reads GLSGTGKTT. Mn(2+) contacts are provided by Lys-201 and His-220. Asp-257 provides a ligand contact to Mn(2+). 3 residues coordinate ATP: Glu-285, Arg-322, and Thr-447. Substrate is bound at residue Arg-322.

This sequence belongs to the phosphoenolpyruvate carboxykinase (ATP) family. It depends on Mn(2+) as a cofactor.

Its subcellular location is the cytoplasm. It catalyses the reaction oxaloacetate + ATP = phosphoenolpyruvate + ADP + CO2. The protein operates within carbohydrate biosynthesis; gluconeogenesis. Functionally, involved in the gluconeogenesis. Catalyzes the conversion of oxaloacetate (OAA) to phosphoenolpyruvate (PEP) through direct phosphoryl transfer between the nucleoside triphosphate and OAA. This Allorhizobium ampelinum (strain ATCC BAA-846 / DSM 112012 / S4) (Agrobacterium vitis (strain S4)) protein is Phosphoenolpyruvate carboxykinase (ATP).